We begin with the raw amino-acid sequence, 184 residues long: Large ribosomal subunit protein uL6 (184 aa).

This sequence belongs to the universal ribosomal protein uL6 family. As to quaternary structure, part of the 50S ribosomal subunit.

Functionally, this protein binds to the 23S rRNA, and is important in its secondary structure. It is located near the subunit interface in the base of the L7/L12 stalk, and near the tRNA binding site of the peptidyltransferase center. The sequence is that of Large ribosomal subunit protein uL6 from Thermococcus gammatolerans (strain DSM 15229 / JCM 11827 / EJ3).